Reading from the N-terminus, the 342-residue chain is Probable receptor-like protein kinase At4g10390 (342 aa).

The 296-residue stretch at Ser-41–Leu-336 folds into the Protein kinase domain. ATP contacts are provided by residues Ile-47–Ile-55 and Lys-69. The active-site Proton acceptor is Asp-165. Residues Ser-169 and Ser-201 each carry the phosphoserine modification. Position 220 is a phosphotyrosine (Tyr-220).

The protein belongs to the protein kinase superfamily. Ser/Thr protein kinase family.

The enzyme catalyses L-seryl-[protein] + ATP = O-phospho-L-seryl-[protein] + ADP + H(+). It carries out the reaction L-threonyl-[protein] + ATP = O-phospho-L-threonyl-[protein] + ADP + H(+). The polypeptide is Probable receptor-like protein kinase At4g10390 (Arabidopsis thaliana (Mouse-ear cress)).